Reading from the N-terminus, the 208-residue chain is Protein GrpE (208 aa).

The segment covering 1–12 has biased composition (basic and acidic residues); the sequence is MTNKDESVEKNT. The tract at residues 1 to 59 is disordered; that stretch reads MTNKDESVEKNTESTVEETNIKQNIDDSVEQAEESKGHLQDEAIEETSDENVIEEIDPK. Residues 13–23 show a composition bias toward polar residues; that stretch reads ESTVEETNIKQ. Over residues 42–55 the composition is skewed to acidic residues; that stretch reads EAIEETSDENVIEE.

This sequence belongs to the GrpE family. As to quaternary structure, homodimer.

It is found in the cytoplasm. Its function is as follows. Participates actively in the response to hyperosmotic and heat shock by preventing the aggregation of stress-denatured proteins, in association with DnaK and GrpE. It is the nucleotide exchange factor for DnaK and may function as a thermosensor. Unfolded proteins bind initially to DnaJ; upon interaction with the DnaJ-bound protein, DnaK hydrolyzes its bound ATP, resulting in the formation of a stable complex. GrpE releases ADP from DnaK; ATP binding to DnaK triggers the release of the substrate protein, thus completing the reaction cycle. Several rounds of ATP-dependent interactions between DnaJ, DnaK and GrpE are required for fully efficient folding. In Staphylococcus aureus (strain Mu3 / ATCC 700698), this protein is Protein GrpE.